A 173-amino-acid polypeptide reads, in one-letter code: Myosin light chain 5 (173 aa).

A disordered region spans residues Met1–Ser20. EF-hand domains follow at residues Thr30–Thr65, Asp100–Lys135, and Met136–Lys171. Ca(2+) is bound by residues Asp43, Asn45, Asp47, and Asp54.

Myosin is a hexamer of 2 heavy chains and 4 light chains. As to expression, expressed in fetal skeletal muscle and retina.

This Homo sapiens (Human) protein is Myosin light chain 5 (MYL5).